Here is an 834-residue protein sequence, read N- to C-terminus: Serine/threonine-protein kinase TNNI3K (834 aa).

A lipid anchor (N-myristoyl glycine) is attached at G2. Positions 21 to 49 form a coiled coil; sequence SESYAIIIERLEDDLQIKENEFQELRHIF. ANK repeat units lie at residues 66-96, 100-129, 133-162, 166-195, 199-229, 233-262, 268-297, 303-334, 338-367, and 380-409; these read RGLS…RPSR, NGFP…DVQQ, GGLT…NVNV, VFFT…DVNV, VGDR…DVNA, EDHV…EVQP, YGDT…TESL, FSET…NINH, DGHT…DMNL, and DEQT…PQDE. The Protein kinase domain occupies 462–722; the sequence is IEFHEIIGSG…EVVRKLEECL (261 aa). ATP-binding positions include 468-476 and K489; that span reads IGSGSFGKV. The Proton acceptor role is filled by D587. A disordered region spans residues 815 to 834; the sequence is PMSPMHLHSRRNSGSFEDGN.

Belongs to the protein kinase superfamily. TKL Ser/Thr protein kinase family. MAP kinase kinase kinase subfamily. Interacts with TNNI3, ACTC, ACTA1, MYBPC3, AIP, FABP3 and HADHB. Requires Mg(2+) as cofactor. In terms of processing, autophosphorylated.

The protein resides in the nucleus. The protein localises to the cytoplasm. The enzyme catalyses L-seryl-[protein] + ATP = O-phospho-L-seryl-[protein] + ADP + H(+). The catalysed reaction is L-threonyl-[protein] + ATP = O-phospho-L-threonyl-[protein] + ADP + H(+). May play a role in cardiac physiology. This Mus musculus (Mouse) protein is Serine/threonine-protein kinase TNNI3K.